The primary structure comprises 452 residues: SAGA complex/transcription factor TFIID complex subunit Taf6 (452 aa).

In terms of domain architecture, Histone-fold spans 4–68 (TVWNIESIKD…TSADISSALR (65 aa)).

Belongs to the TAF6 family. In terms of assembly, component of the 1.8 MDa SAGA (Spt-Ada-Gcn5 acetyltransferase) complex, which is composed of 19 subunits tra1, spt7, taf5, ngg1/ada3, sgf73, spt20, spt8, taf12, taf6, hfi1/ada1, ubp8, gcn5, ada2, spt3, sgf29, taf10, taf9, sgf11 and sus1. The SAGA complex is composed of 4 modules, namely the HAT (histone acetyltransferase) module (gcn5, ada2, ngg1/ada3 and sgf29), the DUB (deubiquitinating) module (ubp8, sgf11, sgf73 and sus1), the core or TAF (TBP-associated factor) module (taf5, taf6, taf9, taf10 and taf12), and the Tra1 or SPT (Suppressor of Ty) module (tra1, hfi1/ada1, spt3, spt7, spt8 and spt20). The Tra1/SPT module binds activators, the core module recruits TBP (TATA-binding protein), the HAT module contains the histone H3 acetyltransferase gcn5, and the DUB module comprises the histone H2B deubiquitinase ubp8. Interacts with gcn5, taf5 and taf73. Component of the 1.2 MDa TFIID complex, which is composed of TATA-binding protein (TBP) and the 14 TBP-associated factors (TAFs). It comprises 1 copy of each taf1, taf2, taf3, taf7, taf8, taf11, taf13, 2 copies of each taf4, taf5, taf6, taf9, taf10, taf12, and 3 copies of taf14. In TFIID, taf6 heterodimerizes with taf9, forming ultimately an octamer consisting of a taf6-taf9 heterotetramer core flanked by taf4-taf12 dimers on either side, similar to the histone H2A-H2B-H3-H4 octamer.

It localises to the nucleus. Its function is as follows. Functions as a component of both the DNA-binding general transcription initiation factor complex TFIID and the transcription coactivator SAGA complex. Binding of TFIID to a promoter (with or without TATA element) is the initial step in pre-initiation complex (PIC) formation. TFIID plays a key role in the regulation of gene expression by RNA polymerase II through different activities such as transcription activator interaction, core promoter recognition and selectivity, TFIIA and TFIIB interaction, chromatin modification (histone acetylation by TAF1), facilitation of DNA opening and initiation of transcription. SAGA acts as a general cofactor required for essentially all RNA polymerase II transcription. At the promoters, SAGA is required for transcription pre-initiation complex (PIC) recruitment. It influences RNA polymerase II transcriptional activity through different activities such as TBP interaction (via core/TAF module) and promoter selectivity, interaction with transcription activators (via Tra1/SPT module), and chromatin modification through histone acetylation (via HAT module) and deubiquitination (via DUB module). SAGA preferentially acetylates histones H3 (to form H3K9ac, H3K14ac, H3K18ac and H3K23ac) and H2B and deubiquitinates histone H2B. SAGA interacts with DNA via upstream activating sequences (UASs). This is SAGA complex/transcription factor TFIID complex subunit Taf6 from Schizosaccharomyces pombe (strain 972 / ATCC 24843) (Fission yeast).